The chain runs to 592 residues: E3 ubiquitin-protein ligase RNF180 (592 aa).

Residues 1 to 564 lie on the Cytoplasmic side of the membrane; that stretch reads MKRSEESTST…DSRGWWFDMD (564 aa). Phosphoserine is present on Ser231. The interval 282-489 is interaction with ZIC2; it reads QSPPSFDPNM…VFLQTELNNA (208 aa). Residues 432 to 474 form an RING-type zinc finger; it reads CAVCLDVYFNPYMCYPCHHIFCEPCLRTLAKDNPASTPCPLCR. The chain crosses the membrane as a helical span at residues 565 to 585; that stretch reads MVIIYIYSVNWVIGFVVFCFL. The Extracellular portion of the chain corresponds to 586 to 592; that stretch reads CYFFFPF.

In terms of assembly, interacts with ZIC2. In terms of tissue distribution, brain, kidney, testis and uterus. membrane protein. Nucleus envelope.

Its subcellular location is the endoplasmic reticulum membrane. It localises to the nucleus envelope. It catalyses the reaction S-ubiquitinyl-[E2 ubiquitin-conjugating enzyme]-L-cysteine + [acceptor protein]-L-lysine = [E2 ubiquitin-conjugating enzyme]-L-cysteine + N(6)-ubiquitinyl-[acceptor protein]-L-lysine.. It participates in protein modification; protein ubiquitination. Its function is as follows. E3 ubiquitin-protein ligase which promotes polyubiquitination and degradation by the proteasome pathway of ZIC2. This is E3 ubiquitin-protein ligase RNF180 (Rnf180) from Mus musculus (Mouse).